The following is a 329-amino-acid chain: Biotin synthase (329 aa).

In terms of domain architecture, Radical SAM core spans Y46–R275. The [4Fe-4S] cluster site is built by C64, C68, and C71. [2Fe-2S] cluster contacts are provided by C108, C140, C200, and R270.

It belongs to the radical SAM superfamily. Biotin synthase family. In terms of assembly, homodimer. The cofactor is [4Fe-4S] cluster. It depends on [2Fe-2S] cluster as a cofactor.

It carries out the reaction (4R,5S)-dethiobiotin + (sulfur carrier)-SH + 2 reduced [2Fe-2S]-[ferredoxin] + 2 S-adenosyl-L-methionine = (sulfur carrier)-H + biotin + 2 5'-deoxyadenosine + 2 L-methionine + 2 oxidized [2Fe-2S]-[ferredoxin]. Its pathway is cofactor biosynthesis; biotin biosynthesis; biotin from 7,8-diaminononanoate: step 2/2. Catalyzes the conversion of dethiobiotin (DTB) to biotin by the insertion of a sulfur atom into dethiobiotin via a radical-based mechanism. The polypeptide is Biotin synthase (Anoxybacillus flavithermus (strain DSM 21510 / WK1)).